Reading from the N-terminus, the 272-residue chain is Cytochrome c1 (272 aa).

Positions 1 to 24 (MTTIVKRALVAAGMVLAIGGAAQA) are cleaved as a signal peptide. 4 residues coordinate heme c: Cys61, Cys64, His65, and Met200. A helical membrane pass occupies residues 244–261 (LGLKVLLFLGVLTAMLLA).

As to quaternary structure, the main subunits of complex b-c1 are: cytochrome b, cytochrome c1 and the Rieske protein. In terms of processing, binds 1 heme c group covalently per subunit.

The protein resides in the cell membrane. In terms of biological role, component of the ubiquinol-cytochrome c reductase complex (complex III or cytochrome b-c1 complex), which is a respiratory chain that generates an electrochemical potential coupled to ATP synthesis. This Rhodospirillum rubrum protein is Cytochrome c1 (petC).